A 382-amino-acid polypeptide reads, in one-letter code: Alkanesulfonate monooxygenase (382 aa).

The protein belongs to the SsuD family. In terms of assembly, homotetramer.

It carries out the reaction an alkanesulfonate + FMNH2 + O2 = an aldehyde + FMN + sulfite + H2O + 2 H(+). In terms of biological role, catalyzes the desulfonation of aliphatic sulfonates. This Buttiauxella sp. (strain PNBS) protein is Alkanesulfonate monooxygenase.